We begin with the raw amino-acid sequence, 291 residues long: NADH-cytochrome b5 reductase 2 (291 aa).

Residues 7 to 23 (PIAATSVVAAAASSYYF) traverse the membrane as a helical segment. Residues 41-145 (DQWVDLKLKS…KGPIIKYQWQ (105 aa)) form the FAD-binding FR-type domain. Residue 148 to 183 (LHKEITLIGAGTGITPLYQLISAINKNPEDKTKVNL) coordinates FAD.

The protein belongs to the flavoprotein pyridine nucleotide cytochrome reductase family. Requires FAD as cofactor.

The protein localises to the mitochondrion outer membrane. It carries out the reaction 2 Fe(III)-[cytochrome b5] + NADH = 2 Fe(II)-[cytochrome b5] + NAD(+) + H(+). Functionally, may mediate the reduction of outer membrane cytochrome b5. This is NADH-cytochrome b5 reductase 2 (MCR1) from Yarrowia lipolytica (strain CLIB 122 / E 150) (Yeast).